Reading from the N-terminus, the 348-residue chain is Quinolinate synthase (348 aa).

The iminosuccinate site is built by His47 and Ser68. Residue Cys113 participates in [4Fe-4S] cluster binding. Iminosuccinate-binding positions include 139–141 (YAN) and Ser156. A [4Fe-4S] cluster-binding site is contributed by Cys200. Residues 226-228 (HPE) and Thr243 contribute to the iminosuccinate site. Position 297 (Cys297) interacts with [4Fe-4S] cluster.

It belongs to the quinolinate synthase family. Type 1 subfamily. [4Fe-4S] cluster serves as cofactor.

It is found in the cytoplasm. The enzyme catalyses iminosuccinate + dihydroxyacetone phosphate = quinolinate + phosphate + 2 H2O + H(+). It participates in cofactor biosynthesis; NAD(+) biosynthesis; quinolinate from iminoaspartate: step 1/1. In terms of biological role, catalyzes the condensation of iminoaspartate with dihydroxyacetone phosphate to form quinolinate. This Sodalis glossinidius (strain morsitans) protein is Quinolinate synthase.